We begin with the raw amino-acid sequence, 132 residues long: Agouti-signaling protein (132 aa).

The signal sequence occupies residues 1 to 22; sequence MDVTRLLLATLLVFLCFFTVYS. The N-linked (GlcNAc...) asparagine glycan is linked to Asn39. The interval 61–87 is disordered; the sequence is HISRKEAEKKRSSKKEASMKKVARPRT. Residues 64–79 show a composition bias toward basic and acidic residues; the sequence is RKEAEKKRSSKKEASM. Cystine bridges form between Cys93–Cys108, Cys100–Cys114, Cys107–Cys125, Cys111–Cys132, and Cys116–Cys123. In terms of domain architecture, Agouti spans 93–132; it reads CVATRDSCKPPAPACCDPCASCQCRFFRSACSCRVLSLNC.

The protein resides in the secreted. Involved in the regulation of melanogenesis. The binding of ASP to MC1R precludes alpha-MSH initiated signaling and thus blocks production of cAMP, leading to a down-regulation of eumelanogenesis (brown/black pigment) and thus increasing synthesis of pheomelanin (yellow/red pigment). This Colobus polykomos (Western black-and-white colobus monkey) protein is Agouti-signaling protein (ASIP).